The following is a 351-amino-acid chain: Photosystem II D2 protein (351 aa).

Residues 39–59 (CSYLALGAWFTGTTFVTSWYT) form a helical membrane-spanning segment. His-116 is a chlorophyll a binding site. Residues 123–139 (GFCLRQFEIARLVGLRP) form a helical membrane-spanning segment. Positions 128 and 141 each coordinate pheophytin a. Residues 151-164 (VFVSVFLLYPLGQA) form a helical membrane-spanning segment. His-196 is a chlorophyll a binding site. The chain crosses the membrane as a helical span at residues 206–226 (GALLCAIHGATVQNTLFEDGE). The a plastoquinone site is built by His-213 and Phe-260. His-213 serves as a coordination point for Fe cation. A Fe cation-binding site is contributed by His-267. A helical transmembrane segment spans residues 277-293 (GLWASSIGIVGLALNLR).

This sequence belongs to the reaction center PufL/M/PsbA/D family. In terms of assembly, PSII is composed of 1 copy each of membrane proteins PsbA, PsbB, PsbC, PsbD, PsbE, PsbF, PsbH, PsbI, PsbJ, PsbK, PsbL, PsbM, PsbT, PsbX, PsbY, PsbZ, Psb30/Ycf12, at least 3 peripheral proteins of the oxygen-evolving complex and a large number of cofactors. It forms dimeric complexes. The D1/D2 heterodimer binds P680, chlorophylls that are the primary electron donor of PSII, and subsequent electron acceptors. It shares a non-heme iron and each subunit binds pheophytin, quinone, additional chlorophylls, carotenoids and lipids. There is also a Cl(-1) ion associated with D1 and D2, which is required for oxygen evolution. The PSII complex binds additional chlorophylls, carotenoids and specific lipids. is required as a cofactor.

It localises to the plastid. Its subcellular location is the chloroplast thylakoid membrane. The catalysed reaction is 2 a plastoquinone + 4 hnu + 2 H2O = 2 a plastoquinol + O2. Functionally, photosystem II (PSII) is a light-driven water:plastoquinone oxidoreductase that uses light energy to abstract electrons from H(2)O, generating O(2) and a proton gradient subsequently used for ATP formation. It consists of a core antenna complex that captures photons, and an electron transfer chain that converts photonic excitation into a charge separation. The D1/D2 (PsbA/PsbD) reaction center heterodimer binds P680, the primary electron donor of PSII as well as several subsequent electron acceptors. D2 is needed for assembly of a stable PSII complex. The polypeptide is Photosystem II D2 protein (Cyanidioschyzon merolae (strain NIES-3377 / 10D) (Unicellular red alga)).